The following is a 268-amino-acid chain: Fc receptor-like protein 6 (268 aa).

The first 16 residues, 1–16, serve as a signal peptide directing secretion; sequence MLLWMVLLLCESMAEA. Residues 17–215 are Extracellular-facing; that stretch reads QELFPNPELT…TAWIKSNMLP (199 aa). Residues 114-194 enclose the Ig-like C2-type domain; the sequence is PVLTLQHEAT…AKNNISREIS (81 aa). Cys-135 and Cys-183 are joined by a disulfide. N-linked (GlcNAc...) asparagine glycosylation is found at Asn-180 and Asn-188. A helical membrane pass occupies residues 216–236; that stretch reads IWLPASLLGGMVIAAVVLMYF. At 237 to 268 the chain is on the cytoplasmic side; the sequence is FKPCKKHARPETPTLKEPDSFLYVSVDNQRYK.

As to quaternary structure, interacts with class II MHC.

The protein resides in the cell membrane. Acts as a MHC class II receptor. When stimulated on its own, does not play a role in cytokine production or the release of cytotoxic granules by NK cells and cytotoxic CD8(+) T cells. Does not act as an Fc receptor. This chain is Fc receptor-like protein 6 (Fcrl6), found in Mus musculus (Mouse).